Consider the following 413-residue polypeptide: Protein trichome birefringence-like 31 (413 aa).

A helical; Signal-anchor for type II membrane protein transmembrane segment spans residues 12–34 (IQSIFQVVLVSLLVLGSVRWILD). Positions 141–143 (GDS) match the GDS motif motif. Residues 384–398 (DCIHWCLPGVPDTWN) carry the DCXHWCLPGXXDXWN motif motif.

The protein belongs to the PC-esterase family. TBL subfamily.

Its subcellular location is the membrane. Its function is as follows. May act as a bridging protein that binds pectin and other cell wall polysaccharides. Probably involved in maintaining esterification of pectins. May be involved in the specific O-acetylation of cell wall polymers. In Arabidopsis thaliana (Mouse-ear cress), this protein is Protein trichome birefringence-like 31 (TBL31).